A 229-amino-acid polypeptide reads, in one-letter code: Matrix protein (229 aa).

Residues 1 to 10 (MSSLKKILGL) show a composition bias toward low complexity. Residues 1 to 23 (MSSLKKILGLKGKGKKSKKLGIA) are disordered. The dynamin binding motif lies at 2-4 (SSL). The PPXY motif motif lies at 24–27 (PPPY). The PTAP/PSAP motif signature appears at 37 to 40 (PSAP).

It belongs to the vesiculoviruses matrix protein family. In terms of assembly, homomultimer. Interacts with viral nucleocapsid; this interaction contributes to the virion assembly. Interacts with the viral envelope glycoprotein; this interaction contributes to the virion assembly. Interacts with host RAE1-NUP98 complex. Interacts with host NEDD4 and TSG101. Interacts with host dynamin. Interacts with host NDUFAF4; the interaction inhibits viral propagation and is independent of interferon activation. Interacts with host GTF2H5; the interaction may inhibit host transcription. In terms of processing, phosphorylated by host.

Its subcellular location is the virion. The protein resides in the host endomembrane system. The protein localises to the host nucleus membrane. It is found in the host nucleus. It localises to the host cytoplasm. Functionally, forms a double layer around the helical nucleocapsid, the inner matrix layer binding to the N helix and the outer matrix layer binding to the envelope glycoprotein. Plays a major role in assembly and budding of virion, by recruiting cellular partners of the ESCRT complexes that play a key role in releasing the budding particle from the host membrane. Condensates the ribonucleocapsid core during virus assembly. Inhibits the host mRNA nuclear export thereby inducing the shut off of cellular transcription and preventing the interferon signaling and the establishment of antiviral state in infected cells. This shutoff presumably inhibits interferon signaling and thus establishment of antiviral state in virus infected cells. Induces cell-rounding, cytoskeleton disorganization and apoptosis in infected cell. Inhibits host transcription, possibly through interaction with host DNA repair factor IIH/TFIIH GTF2H5 subunit. This is Matrix protein (M) from Aedes (Bovine).